Here is a 410-residue protein sequence, read N- to C-terminus: Protein CNPPD1 (410 aa).

A helical membrane pass occupies residues 233–253 (CLLAVAYVSSVALAVASVAVI).

The protein belongs to the CNPPD1 family.

The protein localises to the membrane. This chain is Protein CNPPD1 (CNPPD1), found in Homo sapiens (Human).